A 531-amino-acid polypeptide reads, in one-letter code: GMP synthase [glutamine-hydrolyzing] (531 aa).

One can recognise a Glutamine amidotransferase type-1 domain in the interval 20 to 213 (KILIVDFGSQ…VRKVAGLKGD (194 aa)). Cys97 functions as the Nucleophile in the catalytic mechanism. Residues His187 and Glu189 contribute to the active site. One can recognise a GMPS ATP-PPase domain in the interval 214–406 (WTMRAFREEA…LGLPDVFVGR (193 aa)). 241-247 (SGGVDSA) contacts ATP.

As to quaternary structure, homodimer.

It carries out the reaction XMP + L-glutamine + ATP + H2O = GMP + L-glutamate + AMP + diphosphate + 2 H(+). It participates in purine metabolism; GMP biosynthesis; GMP from XMP (L-Gln route): step 1/1. Functionally, catalyzes the synthesis of GMP from XMP. The chain is GMP synthase [glutamine-hydrolyzing] from Afipia carboxidovorans (strain ATCC 49405 / DSM 1227 / KCTC 32145 / OM5) (Oligotropha carboxidovorans).